Consider the following 404-residue polypeptide: Keratin, type I cuticular Ha3-II (404 aa).

Residues 1-56 (MPYNFCLPSLSCRTSCSSRPCVPPSCHGYTLPGACNIPANVSNCNWFCEGSFNGSE) form a head region. In terms of domain architecture, IF rod spans 56 to 367 (EKETMQFLND…SLLESEDCKL (312 aa)). The coil 1A stretch occupies residues 57–91 (KETMQFLNDRLASYLEKVRQLERDNAELENLIRER). The tract at residues 92–102 (SQQQEPLLCPS) is linker 1. Positions 103-203 (YQSYFKTIEE…HEQEVNTLRC (101 aa)) are coil 1B. Residues 204 to 219 (QLGDRLNVEVDAAPAV) form a linker 12 region. Residues 220–363 (DLNQVLNETR…NTYRSLLESE (144 aa)) are coil 2. A tail region spans residues 364–404 (DCKLPSNPCATTNACEKPIGSCVTNPCGPRSRCGPCNTFGY).

Belongs to the intermediate filament family.

The sequence is that of Keratin, type I cuticular Ha3-II (KRT33B) from Homo sapiens (Human).